A 232-amino-acid polypeptide reads, in one-letter code: Phosphatidylserine decarboxylase proenzyme (232 aa).

Catalysis depends on S190, which acts as the Schiff-base intermediate with substrate; via pyruvic acid. S190 carries the post-translational modification Pyruvic acid (Ser); by autocatalysis.

This sequence belongs to the phosphatidylserine decarboxylase family. PSD-A subfamily. Heterodimer of a large membrane-associated beta subunit and a small pyruvoyl-containing alpha subunit. Pyruvate is required as a cofactor. Post-translationally, is synthesized initially as an inactive proenzyme. Formation of the active enzyme involves a self-maturation process in which the active site pyruvoyl group is generated from an internal serine residue via an autocatalytic post-translational modification. Two non-identical subunits are generated from the proenzyme in this reaction, and the pyruvate is formed at the N-terminus of the alpha chain, which is derived from the carboxyl end of the proenzyme. The post-translation cleavage follows an unusual pathway, termed non-hydrolytic serinolysis, in which the side chain hydroxyl group of the serine supplies its oxygen atom to form the C-terminus of the beta chain, while the remainder of the serine residue undergoes an oxidative deamination to produce ammonia and the pyruvoyl prosthetic group on the alpha chain.

Its subcellular location is the cell membrane. It carries out the reaction a 1,2-diacyl-sn-glycero-3-phospho-L-serine + H(+) = a 1,2-diacyl-sn-glycero-3-phosphoethanolamine + CO2. The protein operates within phospholipid metabolism; phosphatidylethanolamine biosynthesis; phosphatidylethanolamine from CDP-diacylglycerol: step 2/2. Functionally, catalyzes the formation of phosphatidylethanolamine (PtdEtn) from phosphatidylserine (PtdSer). The chain is Phosphatidylserine decarboxylase proenzyme from Rhizobium leguminosarum bv. trifolii (strain WSM2304).